The chain runs to 274 residues: Large ribosomal subunit protein uL2 (274 aa).

Residues 224-274 are disordered; the sequence is VAMNPVDHPHGGGEGRTSGGRHPVTPWGIPTKGYKTRKNKRSNKLIVQKRK. Residues 257–274 show a composition bias toward basic residues; the sequence is YKTRKNKRSNKLIVQKRK.

Belongs to the universal ribosomal protein uL2 family. As to quaternary structure, part of the 50S ribosomal subunit. Forms a bridge to the 30S subunit in the 70S ribosome.

Functionally, one of the primary rRNA binding proteins. Required for association of the 30S and 50S subunits to form the 70S ribosome, for tRNA binding and peptide bond formation. It has been suggested to have peptidyltransferase activity; this is somewhat controversial. Makes several contacts with the 16S rRNA in the 70S ribosome. In Francisella philomiragia subsp. philomiragia (strain ATCC 25017 / CCUG 19701 / FSC 153 / O#319-036), this protein is Large ribosomal subunit protein uL2.